We begin with the raw amino-acid sequence, 350 residues long: Biotin synthase (350 aa).

The Radical SAM core domain maps to 41–268; the sequence is NEVQISRLLS…LSRVRLSAGR (228 aa). [4Fe-4S] cluster contacts are provided by Cys56, Cys60, and Cys63. [2Fe-2S] cluster is bound by residues Cys100, Cys131, Cys191, and Arg263.

This sequence belongs to the radical SAM superfamily. Biotin synthase family. Homodimer. The cofactor is [4Fe-4S] cluster. It depends on [2Fe-2S] cluster as a cofactor.

It catalyses the reaction (4R,5S)-dethiobiotin + (sulfur carrier)-SH + 2 reduced [2Fe-2S]-[ferredoxin] + 2 S-adenosyl-L-methionine = (sulfur carrier)-H + biotin + 2 5'-deoxyadenosine + 2 L-methionine + 2 oxidized [2Fe-2S]-[ferredoxin]. The protein operates within cofactor biosynthesis; biotin biosynthesis; biotin from 7,8-diaminononanoate: step 2/2. Functionally, catalyzes the conversion of dethiobiotin (DTB) to biotin by the insertion of a sulfur atom into dethiobiotin via a radical-based mechanism. The sequence is that of Biotin synthase from Shewanella oneidensis (strain ATCC 700550 / JCM 31522 / CIP 106686 / LMG 19005 / NCIMB 14063 / MR-1).